The chain runs to 566 residues: Bacillolysin (566 aa).

A signal peptide spans 1–27 (MKKKSLALVLATGMAVTTFGGTGSAFA). The propeptide at 28–249 (DSKNVLSTKK…KQDAKAVVKP (222 aa)) is activation peptide. Ca(2+)-binding residues include D307, D309, V311, and D388. H392 serves as a coordination point for Zn(2+). Residue E393 is part of the active site. Zn(2+)-binding residues include H396 and E416. Ca(2+) contacts are provided by E427, N433, D435, E437, E440, Y443, T444, K447, and D450. The active-site Proton donor is H481.

This sequence belongs to the peptidase M4 family. Ca(2+) is required as a cofactor. The cofactor is Zn(2+).

Its subcellular location is the secreted. The enzyme catalyses Similar, but not identical, to that of thermolysin.. Its function is as follows. Extracellular zinc metalloprotease. The polypeptide is Bacillolysin (npr) (Bacillus cereus).